Reading from the N-terminus, the 314-residue chain is Thymidylate synthase (314 aa).

DUMP is bound by residues Arg-21 and 176–177 (RR). Cys-196 functions as the Nucleophile in the catalytic mechanism. Residues 216–219 (RSAD), Asn-227, and 257–259 (HLY) each bind dUMP. (6R)-5,10-methylene-5,6,7,8-tetrahydrofolate is bound at residue Asp-219. (6R)-5,10-methylene-5,6,7,8-tetrahydrofolate is bound at residue Ser-313.

The protein belongs to the thymidylate synthase family. Bacterial-type ThyA subfamily. In terms of assembly, homodimer.

It is found in the cytoplasm. The catalysed reaction is dUMP + (6R)-5,10-methylene-5,6,7,8-tetrahydrofolate = 7,8-dihydrofolate + dTMP. Its pathway is pyrimidine metabolism; dTTP biosynthesis. In terms of biological role, catalyzes the reductive methylation of 2'-deoxyuridine-5'-monophosphate (dUMP) to 2'-deoxythymidine-5'-monophosphate (dTMP) while utilizing 5,10-methylenetetrahydrofolate (mTHF) as the methyl donor and reductant in the reaction, yielding dihydrofolate (DHF) as a by-product. This enzymatic reaction provides an intracellular de novo source of dTMP, an essential precursor for DNA biosynthesis. The polypeptide is Thymidylate synthase (Listeria monocytogenes serotype 4b (strain CLIP80459)).